The primary structure comprises 528 residues: Chromosomal replication initiator protein DnaA (528 aa).

The interval 1 to 104 (MNDDPNALAR…PVDDEPESEA (104 aa)) is domain I, interacts with DnaA modulators. Residues 93–159 (AAPVDDEPES…DFEEVDDDSE (67 aa)) form a disordered region. Over residues 104–123 (APSRERRPDPEPVHTPRHLE) the composition is skewed to basic and acidic residues. Residues 105-187 (PSRERRPDPE…GPAPAATGGN (83 aa)) are domain II. A compositionally biased stretch (acidic residues) spans 149 to 159 (TDFEEVDDDSE). The domain III, AAA+ region stretch occupies residues 188–404 (SLNAKYTFDT…GALIRVTAFA (217 aa)). The ATP site is built by G232, G234, K235, and T236. The interval 405-528 (SLNRQPLDLT…TARIKQRSKR (124 aa)) is domain IV, binds dsDNA.

It belongs to the DnaA family. Oligomerizes as a right-handed, spiral filament on DNA at oriC.

The protein localises to the cytoplasm. Plays an essential role in the initiation and regulation of chromosomal replication. ATP-DnaA binds to the origin of replication (oriC) to initiate formation of the DNA replication initiation complex once per cell cycle. Binds the DnaA box (a 9 base pair repeat at the origin) and separates the double-stranded (ds)DNA. Forms a right-handed helical filament on oriC DNA; dsDNA binds to the exterior of the filament while single-stranded (ss)DNA is stabiized in the filament's interior. The ATP-DnaA-oriC complex binds and stabilizes one strand of the AT-rich DNA unwinding element (DUE), permitting loading of DNA polymerase. After initiation quickly degrades to an ADP-DnaA complex that is not apt for DNA replication. Binds acidic phospholipids. The protein is Chromosomal replication initiator protein DnaA of Rhodococcus opacus (strain B4).